Here is a 273-residue protein sequence, read N- to C-terminus: Nitrogenase iron protein (273 aa).

8–15 contributes to the ATP binding site; sequence GKGGIGKS. Cys95 lines the [4Fe-4S] cluster pocket. The residue at position 98 (Arg98) is an ADP-ribosylarginine; by dinitrogenase reductase ADP-ribosyltransferase. Cys130 serves as a coordination point for [4Fe-4S] cluster.

The protein belongs to the NifH/BchL/ChlL family. As to quaternary structure, homodimer. [4Fe-4S] cluster is required as a cofactor. Post-translationally, the reversible ADP-ribosylation of Arg-98 inactivates the nitrogenase reductase and regulates nitrogenase activity.

The enzyme catalyses N2 + 8 reduced [2Fe-2S]-[ferredoxin] + 16 ATP + 16 H2O = H2 + 8 oxidized [2Fe-2S]-[ferredoxin] + 2 NH4(+) + 16 ADP + 16 phosphate + 6 H(+). Functionally, the key enzymatic reactions in nitrogen fixation are catalyzed by the nitrogenase complex, which has 2 components: the iron protein and the molybdenum-iron protein. This Methanosarcina mazei (strain ATCC BAA-159 / DSM 3647 / Goe1 / Go1 / JCM 11833 / OCM 88) (Methanosarcina frisia) protein is Nitrogenase iron protein.